The primary structure comprises 169 residues: Dihydrofolate reductase type 8 (169 aa).

Residues 3–169 enclose the DHFR domain; sequence ELHAILAATA…FTYRKKELTE (167 aa).

It belongs to the dihydrofolate reductase family. Homodimer.

It catalyses the reaction (6S)-5,6,7,8-tetrahydrofolate + NADP(+) = 7,8-dihydrofolate + NADPH + H(+). It participates in cofactor biosynthesis; tetrahydrofolate biosynthesis; 5,6,7,8-tetrahydrofolate from 7,8-dihydrofolate: step 1/1. Its function is as follows. Key enzyme in folate metabolism. Catalyzes an essential reaction for de novo glycine and purine synthesis, and for DNA precursor synthesis. The polypeptide is Dihydrofolate reductase type 8 (dhfrVIII) (Escherichia coli).